The sequence spans 121 residues: Protein yippee-like 5 (121 aa).

The region spanning Arg13–Glu110 is the Yippee domain. Cys17, Cys20, Cys73, and Cys76 together coordinate Zn(2+). The residue at position 118 (Ser118) is a Phosphoserine.

Belongs to the yippee family. Identified in the CTLH complex that contains GID4, RANBP9 and/or RANBP10, MKLN1, MAEA, RMND5A (or alternatively its paralog RMND5B), GID8, ARMC8, WDR26 and YPEL5. Within this complex, MAEA, RMND5A (or alternatively its paralog RMND5B), GID8, WDR26, and RANBP9 and/or RANBP10 form the catalytic core, while GID4, MKLN1, ARMC8 and YPEL5 have ancillary roles. Interacts with RANBP9 and RANBP10.

Its subcellular location is the nucleus. It is found in the cytoplasm. The protein localises to the cytoskeleton. The protein resides in the microtubule organizing center. It localises to the centrosome. Its subcellular location is the spindle pole. It is found in the midbody. In terms of biological role, component of the CTLH E3 ubiquitin-protein ligase complex that selectively accepts ubiquitin from UBE2H and mediates ubiquitination and subsequent proteasomal degradation of the transcription factor HBP1. Required for normal cell proliferation. In Bos taurus (Bovine), this protein is Protein yippee-like 5 (YPEL5).